Here is a 243-residue protein sequence, read N- to C-terminus: MTCSRRDMSLSFGSAVGAYERGRPSYPPEAIDWLLPAAARRVLDLGAGTGKLTTRLVERGLDVVAVDPIPEMLDVLRAALPQTVALLGTAEEIPLDDNSVDAVLVAQAWHWVDPARAIPEVARVLRPGGRLGLVWNTRDERLGWVRELGEIIGRDGDPVRDRVTLPEPFTTVQRHQVEWTNYLTPQALIDLVASRSYCITSPAQVRTKTLDRVRQLLATHPALANSNGLALPYVTVCVRATLA.

This sequence belongs to the methyltransferase superfamily.

This is an uncharacterized protein from Mycobacterium tuberculosis (strain CDC 1551 / Oshkosh).